Consider the following 483-residue polypeptide: Salicylaldehyde dehydrogenase (483 aa).

228-233 (GSTRVG) lines the NAD(+) pocket. Catalysis depends on residues Glu250 and Cys284.

Belongs to the aldehyde dehydrogenase family.

It carries out the reaction salicylaldehyde + NAD(+) + H2O = salicylate + NADH + 2 H(+). The protein operates within aromatic compound metabolism; naphthalene degradation. The polypeptide is Salicylaldehyde dehydrogenase (nahF) (Pseudomonas putida (Arthrobacter siderocapsulatus)).